The primary structure comprises 207 residues: Ras-related protein Rab-8A (207 aa).

Residues serine 17, glycine 18, valine 19, glycine 20, lysine 21, threonine 22, cysteine 23, serine 35, serine 39, and threonine 40 each contribute to the GTP site. Position 22 (threonine 22) interacts with Mg(2+). Short sequence motifs (switch) lie at residues 31–45 (DAFN…GIDF) and 63–80 (DTAG…YYRG). Residues threonine 40 and aspartate 63 each contribute to the Mg(2+) site. Glycine 66 is a GTP binding site. Threonine 72 is subject to Phosphothreonine. Positions 121, 122, 124, 152, and 153 each coordinate GTP. Residues serine 181 and serine 185 each carry the phosphoserine modification. Cysteine 204 carries the cysteine methyl ester modification. The S-geranylgeranyl cysteine moiety is linked to residue cysteine 204. A propeptide spans 205–207 (VLL) (removed in mature form).

Belongs to the small GTPase superfamily. Rab family. As to quaternary structure, interacts (GTP-bound form) with MICALL1; regulates RAB8A association with recycling endosomes. Interacts with MICALL2; competes with RAB13 and is involved in E-cadherin endocytic recycling. Interacts (GTP-bound form) with MICAL1, MICALCL, MICAL3, EHBP1 and EHBP1L1; at least in case of MICAL1, MICALCL, MICAL3 and EHBP1L1 two molecules of RAB8A can bind to one molecule of the effector protein; ternary complexes of RAB8A, RAB13 and either MICAL1 or EHBP1L1 are possible. Interacts with EHD1. Interacts with MAP4K2 and SYTL4. Interacts with SGSM1 and SGSM3. Interacts with RABIF, RIMS2, RPH3A and RPH3A. Interacts with OPTN. Interacts with RAB3IP, RAB3IP functions as guanine exchange factor (GEF). Interacts with MYO5B. Interacts with CIMAP3. Interacts with BIRC6/bruce. Interacts with OCRL. Interacts with AHI1. Interacts with DCDC1. Interacts with LRRK2; interaction facilitates phosphorylation of Thr-72. Interacts with RAB31P, GDI1, GDI2, CHM, CHML, RABGGTA, RABGGTB, TBC1D15 and INPP5B; these interactions are dependent on Thr-72 not being phosphorylated. Interacts with RILPL1 and RILPL2; these interactions are dependent on the phosphorylation of Thr-72 by LRRK2. Interacts with DZIP1; prevents inhibition by the GDP-dissociation inhibitor GDI2. Interacts (in GDP-bound form) with RAB3IP/Rabin8, RAB3IP functions as guanine exchange factor (GEF) towards RAB8A. Interacts (in GDP-bound form) with RPGR, RPGR functions as GEF towards RAB8A. It depends on Mg(2+) as a cofactor. Post-translationally, phosphorylation of Thr-72 in the switch II region by LRRK2 prevents the association of RAB regulatory proteins, including CHM, CHML and RAB GDP dissociation inhibitors GDI1 and GDI2. Phosphorylation by LRRK2 is required for localization to stressed lysosomes.

The protein localises to the cell membrane. Its subcellular location is the golgi apparatus. The protein resides in the endosome membrane. It is found in the recycling endosome membrane. It localises to the cell projection. The protein localises to the cilium. Its subcellular location is the cytoplasmic vesicle. The protein resides in the phagosome membrane. It is found in the cytoplasm. It localises to the cytoskeleton. The protein localises to the microtubule organizing center. Its subcellular location is the centrosome. The protein resides in the centriole. It is found in the cilium basal body. It localises to the midbody. The protein localises to the lysosome. It carries out the reaction GTP + H2O = GDP + phosphate + H(+). With respect to regulation, regulated by guanine nucleotide exchange factors (GEFs) such as RAB3IP/Rabin8 and RPGR which promote the exchange of bound GDP for free GTP, GTPase activating proteins (GAPs) which increase the GTP hydrolysis activity, and GDP dissociation inhibitors (GDIs) which inhibit the dissociation of the nucleotide from the GTPase. Activated in response to insulin. In terms of biological role, the small GTPases Rab are key regulators of intracellular membrane trafficking, from the formation of transport vesicles to their fusion with membranes. Rabs cycle between an inactive GDP-bound form and an active GTP-bound form that is able to recruit to membranes different sets of downstream effectors directly responsible for vesicle formation, movement, tethering and fusion. RAB8A is involved in polarized vesicular trafficking and neurotransmitter release. Together with RAB11A, RAB3IP, the exocyst complex, PARD3, PRKCI, ANXA2, CDC42 and DNMBP promotes transcytosis of PODXL to the apical membrane initiation sites (AMIS), apical surface formation and lumenogenesis. Regulates the compacted morphology of the Golgi. Together with MYO5B and RAB11A participates in epithelial cell polarization. Also involved in membrane trafficking to the cilium and ciliogenesis. Together with MICALL2, may also regulate adherens junction assembly. May play a role in insulin-induced transport to the plasma membrane of the glucose transporter GLUT4 and therefore play a role in glucose homeostasis. Involved in autophagy. Participates in the export of a subset of neosynthesized proteins through a Rab8-Rab10-Rab11-dependent endososomal export route. Targeted to and stabilized on stressed lysosomes through LRRK2 phosphorylation. Suppresses stress-induced lysosomal enlargement through EHBP1 and EHNP1L1 effector proteins. The chain is Ras-related protein Rab-8A (RAB8A) from Pongo abelii (Sumatran orangutan).